A 123-amino-acid polypeptide reads, in one-letter code: MARIAGVDLPRDKRVEVGLTYIFGIGRKTSNNILAAAGINPDTRIKDLTEEEVNNLRRIIDADHHVEGDLRREIALNIKRLKEIRCYRGIRHIKGLPVRGQKTKTNARTRKGPKKTVGRKKKK.

The disordered stretch occupies residues 97–123; that stretch reads PVRGQKTKTNARTRKGPKKTVGRKKKK. The span at 101–123 shows a compositional bias: basic residues; it reads QKTKTNARTRKGPKKTVGRKKKK.

The protein belongs to the universal ribosomal protein uS13 family. In terms of assembly, part of the 30S ribosomal subunit. Forms a loose heterodimer with protein S19. Forms two bridges to the 50S subunit in the 70S ribosome.

In terms of biological role, located at the top of the head of the 30S subunit, it contacts several helices of the 16S rRNA. In the 70S ribosome it contacts the 23S rRNA (bridge B1a) and protein L5 of the 50S subunit (bridge B1b), connecting the 2 subunits; these bridges are implicated in subunit movement. Contacts the tRNAs in the A and P-sites. The polypeptide is Small ribosomal subunit protein uS13 (Alkaliphilus oremlandii (strain OhILAs) (Clostridium oremlandii (strain OhILAs))).